The chain runs to 81 residues: ATP synthase subunit c, chloroplastic (81 aa).

Transmembrane regions (helical) follow at residues 3–23 and 57–77; these read AIVSAASVIAAGLAVGLAAIG and LAFMESLTIYGLVVALSLLFA.

It belongs to the ATPase C chain family. As to quaternary structure, F-type ATPases have 2 components, F(1) - the catalytic core - and F(0) - the membrane proton channel. F(1) has five subunits: alpha(3), beta(3), gamma(1), delta(1), epsilon(1). F(0) has four main subunits: a(1), b(1), b'(1) and c(10-14). The alpha and beta chains form an alternating ring which encloses part of the gamma chain. F(1) is attached to F(0) by a central stalk formed by the gamma and epsilon chains, while a peripheral stalk is formed by the delta, b and b' chains.

It localises to the plastid. It is found in the chloroplast thylakoid membrane. In terms of biological role, f(1)F(0) ATP synthase produces ATP from ADP in the presence of a proton or sodium gradient. F-type ATPases consist of two structural domains, F(1) containing the extramembraneous catalytic core and F(0) containing the membrane proton channel, linked together by a central stalk and a peripheral stalk. During catalysis, ATP synthesis in the catalytic domain of F(1) is coupled via a rotary mechanism of the central stalk subunits to proton translocation. Key component of the F(0) channel; it plays a direct role in translocation across the membrane. A homomeric c-ring of between 10-14 subunits forms the central stalk rotor element with the F(1) delta and epsilon subunits. In Cyanidioschyzon merolae (strain NIES-3377 / 10D) (Unicellular red alga), this protein is ATP synthase subunit c, chloroplastic.